Here is a 365-residue protein sequence, read N- to C-terminus: S-adenosylmethionine:tRNA ribosyltransferase-isomerase (365 aa).

It belongs to the QueA family. In terms of assembly, monomer.

Its subcellular location is the cytoplasm. It catalyses the reaction 7-aminomethyl-7-carbaguanosine(34) in tRNA + S-adenosyl-L-methionine = epoxyqueuosine(34) in tRNA + adenine + L-methionine + 2 H(+). Its pathway is tRNA modification; tRNA-queuosine biosynthesis. Functionally, transfers and isomerizes the ribose moiety from AdoMet to the 7-aminomethyl group of 7-deazaguanine (preQ1-tRNA) to give epoxyqueuosine (oQ-tRNA). The chain is S-adenosylmethionine:tRNA ribosyltransferase-isomerase from Helicobacter hepaticus (strain ATCC 51449 / 3B1).